Consider the following 246-residue polypeptide: Probable transcriptional regulatory protein KPK_1906 (246 aa).

Belongs to the TACO1 family.

It is found in the cytoplasm. The polypeptide is Probable transcriptional regulatory protein KPK_1906 (Klebsiella pneumoniae (strain 342)).